The sequence spans 493 residues: Dipeptide and tripeptide permease B (493 aa).

Residues 1–27 (MERSTPTGLLQQPKPFFMIFFVELWER) lie on the Cytoplasmic side of the membrane. Residues 28 to 48 (FGYYGVQGILAVFFVQQLGFS) traverse the membrane as a helical segment. Residues 49 to 52 (QEQA) are Periplasmic-facing. A helical transmembrane segment spans residues 53–73 (FVTFGAFAALVYGLISIGGYV). Residues 74-82 (GDHLLGTKR) lie on the Cytoplasmic side of the membrane. The helical transmembrane segment at 83–103 (TMVLGAVVLAAGYFATGLSLY) threads the bilayer. Residues 104–106 (QPN) lie on the Periplasmic side of the membrane. The helical transmembrane segment at 107–127 (LIFFALGTIAVGNGLFKANPA) threads the bilayer. At 128 to 146 (SLLSKCYPPKDPRLDGAFT) the chain is on the cytoplasmic side. A helical transmembrane segment spans residues 147 to 167 (LFYMSINIGSLLSLSLAPVIA). The Periplasmic segment spans residues 168-169 (ER). A helical transmembrane segment spans residues 170–190 (FGYTVTYYLCGIGLIFALLVY). Residues 191–212 (FCCRHMVRHIGSEPDTKPLNWR) are Cytoplasmic-facing. 2 consecutive transmembrane segments (helical) span residues 213–233 (NLLL…WLMN) and 234–254 (HVFI…FIFF). The Cytoplasmic portion of the chain corresponds to 255–267 (REASKQDRLGRNK). Residues 268–288 (MFVAFILMIEAIVFYVLYAQM) traverse the membrane as a helical segment. The Periplasmic segment spans residues 289–311 (PTSLNFFAINNVHHEILGFSINP). Residues 312–332 (VSFQALNPFWVVVASPILASI) traverse the membrane as a helical segment. The Cytoplasmic portion of the chain corresponds to 333 to 350 (YTRLGSQNRDLSMPAKFT). Residues 351 to 371 (LGMFLCSLGFLTAAAAGMWFA) traverse the membrane as a helical segment. Residues 372–379 (DAQGLTSP) are Periplasmic-facing. The helical transmembrane segment at 380 to 400 (WFIVLVYLFQSLGELMISALG) threads the bilayer. Topologically, residues 401 to 424 (LAMVAALVPQYLMGFILGMWFLTQ) are cytoplasmic. The chain crosses the membrane as a helical span at residues 425–445 (AASFLIGGYVATFTATPEGMT). The Periplasmic segment spans residues 446 to 456 (DPLETLPIYTD). A helical transmembrane segment spans residues 457 to 477 (VFGKIGMVTLVIALVMALLIP). The Cytoplasmic portion of the chain corresponds to 478–493 (WLNRMINSSAAEDAVA).

The protein belongs to the major facilitator superfamily. Proton-dependent oligopeptide transporter (POT/PTR) (TC 2.A.17) family. DtpB subfamily.

The protein localises to the cell inner membrane. Its function is as follows. Proton-dependent permease that transports di- and tripeptides. The chain is Dipeptide and tripeptide permease B from Yersinia enterocolitica serotype O:8 / biotype 1B (strain NCTC 13174 / 8081).